The chain runs to 138 residues: Phospholipase A2 homolog 1 (138 aa).

Positions 1–16 (MRTLWIMAVLLVGVEG) are cleaved as a signal peptide. 7 cysteine pairs are disulfide-bonded: cysteine 42–cysteine 132, cysteine 44–cysteine 60, cysteine 59–cysteine 111, cysteine 65–cysteine 138, cysteine 66–cysteine 104, cysteine 73–cysteine 97, and cysteine 91–cysteine 102. Residues 121-134 (KKYKNNYLKPFCKK) form an important for membrane-damaging activities in eukaryotes and bacteria; heparin-binding region.

This sequence belongs to the phospholipase A2 family. Group II subfamily. K49 sub-subfamily. In terms of assembly, homodimer; non-covalently linked (probable alternative/compact dimer conformation in solution). Expressed by the venom gland.

The protein localises to the secreted. In terms of biological role, snake venom phospholipase A2 homolog that lacks enzymatic and anticoagulant activities. In mice, it induces conspicuous local myonecrosis, edema, and a systemic interleukin-6 response. In vitro, it is cytolytic upon myoblasts, and weakly bactericidal. A model of myotoxic mechanism has been proposed: an apo Lys49-PLA2 is activated by the entrance of a hydrophobic molecule (e.g. fatty acid) at the hydrophobic channel of the protein leading to a reorientation of a monomer. This reorientation causes a transition between 'inactive' to 'active' states, causing alignment of C-terminal and membrane-docking sites (MDoS) side-by-side and putting the membrane-disruption sites (MDiS) in the same plane, exposed to solvent and in a symmetric position for both monomers. The MDoS region stabilizes the toxin on membrane by the interaction of charged residues with phospholipid head groups. Subsequently, the MDiS region destabilizes the membrane with penetration of hydrophobic residues. This insertion causes a disorganization of the membrane, allowing an uncontrolled influx of ions (i.e. calcium and sodium), and eventually triggering irreversible intracellular alterations and cell death. In Bothrops atrox (Barba amarilla), this protein is Phospholipase A2 homolog 1.